Here is a 401-residue protein sequence, read N- to C-terminus: MTKQNKSALNSNIDFIQLKLYDFFDEKIDQEKIISKRLNKTPNFENTNHKLFLDENNTFKYDNPICPVCGSHKIIKKGTIKKNKQNTNGKTTEFKEQQYQCKKCGKKFGIYNNPLIGENKQFLQEIMDKIPGIMKIGYQSLRKISKYFEIFLGIRISHQTIKNWSDKNHEESISNEKFEYSGYYLYDEQFLRLNGTRHYRLTLFDAILNIPVTERIVRRRIPKNTKKFILESTENKPFICLTTDLFPMYRNVADEIEVKHQLCIFHLFQTINHKLKVYCRRNKINGKQRDHIYENAQELKNCFRQNSKKEAIEQFKQYLQKYTAIPVVLKDFIRKHIINHFHRYVEYLDDENIEKTSNKVENYYRQTNPEKIKKIYKTKNGILTFLDYQMQNWTEKHIKIK.

This polypeptide is involved in transposition, and should therefore bind to nucleic acids. The polypeptide is Insertion element ISM1 uncharacterized 48.3 kDa protein (Methanobrevibacter smithii).